The primary structure comprises 318 residues: L-lactate dehydrogenase (318 aa).

NAD(+)-binding positions include Val-18, Asp-39, Lys-44, Tyr-69, and Gly-83–Ala-84. Substrate-binding residues include Gln-86 and Arg-92. NAD(+)-binding positions include Ser-105, Val-122 to Asn-124, and Ser-147. Substrate is bound at residue Asn-124–Asp-127. Asp-152–Arg-155 serves as a coordination point for substrate. Catalysis depends on His-179, which acts as the Proton acceptor. Tyr-225 carries the post-translational modification Phosphotyrosine. Position 234 (Thr-234) interacts with substrate.

Belongs to the LDH/MDH superfamily. LDH family. As to quaternary structure, homotetramer.

It is found in the cytoplasm. It carries out the reaction (S)-lactate + NAD(+) = pyruvate + NADH + H(+). It participates in fermentation; pyruvate fermentation to lactate; (S)-lactate from pyruvate: step 1/1. Functionally, catalyzes the conversion of lactate to pyruvate. This is L-lactate dehydrogenase from Clostridium botulinum (strain ATCC 19397 / Type A).